The primary structure comprises 662 residues: DNA ligase (662 aa).

NAD(+) is bound by residues 31–35, 79–80, and glutamate 119; these read DSEYD and SL. Catalysis depends on lysine 121, which acts as the N6-AMP-lysine intermediate. NAD(+) is bound by residues arginine 142, glutamate 176, lysine 288, and lysine 312. Cysteine 405, cysteine 408, cysteine 421, and cysteine 427 together coordinate Zn(2+). A BRCT domain is found at 583–662; sequence NIEKKLDNLT…DELNSFLDNL (80 aa).

The protein belongs to the NAD-dependent DNA ligase family. LigA subfamily. The cofactor is Mg(2+). Mn(2+) is required as a cofactor.

The catalysed reaction is NAD(+) + (deoxyribonucleotide)n-3'-hydroxyl + 5'-phospho-(deoxyribonucleotide)m = (deoxyribonucleotide)n+m + AMP + beta-nicotinamide D-nucleotide.. Its function is as follows. DNA ligase that catalyzes the formation of phosphodiester linkages between 5'-phosphoryl and 3'-hydroxyl groups in double-stranded DNA using NAD as a coenzyme and as the energy source for the reaction. It is essential for DNA replication and repair of damaged DNA. In Finegoldia magna (strain ATCC 29328 / DSM 20472 / WAL 2508) (Peptostreptococcus magnus), this protein is DNA ligase.